We begin with the raw amino-acid sequence, 193 residues long: MSARQPQNNNQQNNNSILQALQQVQQQNRPIVANIARIDPYMANMAYKMYNEIDVSINESVSTIDITNKMLRIAKGMIRSIEQGHAKMSATPFTLKESFKSLVMELLDVAYTDINTFMTQKYLELQENLTNNDLKKIHELNKTVMEYGLIYINAIHFVLLDTQGFLNEKLPTQLISPVDSARLLGHFHLKHKT.

This is an uncharacterized protein from Acidianus convivator (ATV).